The following is a 551-amino-acid chain: Small ribosomal subunit protein bS1 (551 aa).

S1 motif domains lie at Gly-21–Glu-83, Gly-101–Arg-167, Gly-188–Lys-256, Asn-273–Lys-343, Asp-360–Lys-430, and Asp-447–Lys-516.

Belongs to the bacterial ribosomal protein bS1 family.

Binds mRNA; thus facilitating recognition of the initiation point. It is needed to translate mRNA with a short Shine-Dalgarno (SD) purine-rich sequence. In Coxiella burnetii (strain RSA 493 / Nine Mile phase I), this protein is Small ribosomal subunit protein bS1 (rpsA).